The sequence spans 308 residues: Olfactory receptor 4N5 (308 aa).

The Extracellular segment spans residues 1 to 25; it reads METQNLTVVTEFILLGLTQSQDAQL. The N-linked (GlcNAc...) asparagine glycan is linked to asparagine 5. The chain crosses the membrane as a helical span at residues 26-49; sequence LVFVLVLIFYLIILPGNFLIIFTI. Residues 50 to 57 are Cytoplasmic-facing; sequence KSDPGLTA. Residues 58–79 traverse the membrane as a helical segment; that stretch reads PLYFFLGNLALLDASYSFIVVP. Residues 80–100 lie on the Extracellular side of the membrane; it reads RMLVDFLSEKKVISYRSCITQ. Cysteine 97 and cysteine 189 are disulfide-bonded. A helical membrane pass occupies residues 101 to 120; sequence LFFLHFLGAGEMFLLVVMAF. Topologically, residues 121 to 139 are cytoplasmic; that stretch reads DRYIAICRPLHYSTIMNPR. Residues 140 to 158 traverse the membrane as a helical segment; that stretch reads ACYALSLVLWLGGFIHSIV. Residues 159–195 are Extracellular-facing; that stretch reads QVALILHLPFCGPNQLDNFFCDVPQVIKLACTNTFVV. Residues 196-219 form a helical membrane-spanning segment; that stretch reads ELLMVSNSGLLSLLCFLGLLASYA. Over 220–235 the chain is Cytoplasmic; that stretch reads VILCRIREHSSEGKSK. Residues 236–258 form a helical membrane-spanning segment; the sequence is AISTCTTHIIIIFLMFGPAIFIY. Over 259 to 269 the chain is Extracellular; that stretch reads TCPFQAFPADK. The helical transmembrane segment at 270-289 threads the bilayer; it reads VVSLFHTVIFPLMNPVIYTL. The Cytoplasmic portion of the chain corresponds to 290–308; sequence RNQEVKASMRKLLSQHMFC.

It belongs to the G-protein coupled receptor 1 family.

The protein localises to the cell membrane. Odorant receptor. The chain is Olfactory receptor 4N5 (OR4N5) from Homo sapiens (Human).